The following is a 196-amino-acid chain: Signal peptidase complex catalytic subunit SEC11 (196 aa).

The Cytoplasmic portion of the chain corresponds to 1–14 (MLSSLSPYMANPRQ). Residues 15 to 33 (TFTQVLNFALVLSTAFMLW) form a helical; Signal-anchor for type II membrane protein membrane-spanning segment. Over 34–196 (KGLSVYTNSA…MGLMVILQRE (163 aa)) the chain is Lumenal. Catalysis depends on charge relay system residues Ser-53 and His-92. A disordered region spans residues 101–133 (VPGKDKTKKGGKQGVEASPSSLESQKLLTKGDN). Over residues 118-133 (SPSSLESQKLLTKGDN) the composition is skewed to polar residues. N-linked (GlcNAc...) asparagine glycosylation is present at Asn-134. Asp-138 functions as the Charge relay system in the catalytic mechanism. Positions 182-193 (VLLGFMGLMVIL) are C-terminal short (CTS) helix.

Belongs to the peptidase S26B family. Component of the signal peptidase complex (SPC) composed of a catalytic subunit SEC11 and three accessory subunits SPC1, SPC2 and SPC3. The complex induces a local thinning of the ER membrane which is used to measure the length of the signal peptide (SP) h-region of protein substrates. This ensures the selectivity of the complex towards h-regions shorter than 18-20 amino acids. SPC associates with the translocon complex.

Its subcellular location is the endoplasmic reticulum membrane. The catalysed reaction is Cleavage of hydrophobic, N-terminal signal or leader sequences from secreted and periplasmic proteins.. In terms of biological role, catalytic component of the signal peptidase complex (SPC) which catalyzes the cleavage of N-terminal signal sequences from nascent proteins as they are translocated into the lumen of the endoplasmic reticulum. Specifically cleaves N-terminal signal peptides that contain a hydrophobic alpha-helix (h-region) shorter than 18-20 amino acids. The polypeptide is Signal peptidase complex catalytic subunit SEC11 (SEC11) (Ajellomyces dermatitidis (strain ER-3 / ATCC MYA-2586) (Blastomyces dermatitidis)).